Reading from the N-terminus, the 130-residue chain is Ribosome-binding factor A (130 aa).

The protein belongs to the RbfA family. In terms of assembly, monomer. Binds 30S ribosomal subunits, but not 50S ribosomal subunits or 70S ribosomes.

The protein localises to the cytoplasm. In terms of biological role, one of several proteins that assist in the late maturation steps of the functional core of the 30S ribosomal subunit. Associates with free 30S ribosomal subunits (but not with 30S subunits that are part of 70S ribosomes or polysomes). Required for efficient processing of 16S rRNA. May interact with the 5'-terminal helix region of 16S rRNA. This Prochlorococcus marinus (strain MIT 9312) protein is Ribosome-binding factor A.